A 254-amino-acid chain; its full sequence is Glutamate racemase (254 aa).

Residues 10–11 and 42–43 contribute to the substrate site; these read DS and YG. C73 (proton donor/acceptor) is an active-site residue. 74 to 75 is a binding site for substrate; it reads NT. The Proton donor/acceptor role is filled by C183. 184-185 contacts substrate; it reads TH.

It belongs to the aspartate/glutamate racemases family.

The enzyme catalyses L-glutamate = D-glutamate. The protein operates within cell wall biogenesis; peptidoglycan biosynthesis. Provides the (R)-glutamate required for cell wall biosynthesis. This Herpetosiphon aurantiacus (strain ATCC 23779 / DSM 785 / 114-95) protein is Glutamate racemase.